A 212-amino-acid polypeptide reads, in one-letter code: uncharacterized protein (212 aa).

The S-adenosyl-L-methionine site is built by Gly-53 and Glu-74.

It belongs to the methyltransferase superfamily. YrrT family.

Functionally, could be a S-adenosyl-L-methionine-dependent methyltransferase. This is an uncharacterized protein from Exiguobacterium sibiricum (strain DSM 17290 / CCUG 55495 / CIP 109462 / JCM 13490 / 255-15).